A 680-amino-acid polypeptide reads, in one-letter code: Putative E3 ubiquitin-protein ligase UNKL (680 aa).

Residues 1 to 22 are disordered; it reads MPSVSKAAAAALSGSPPQTEKP. 4 C3H1-type zinc fingers span residues 75 to 104, 115 to 145, 243 to 277, and 283 to 310; these read YSPD…HRTT, YYKT…HGPL, QYRS…HSRT, and PEST…HVEK. Low complexity-rich tracts occupy residues 326-337, 375-396, 465-497, and 545-562; these read TSPSSTGSGQPG, VSSS…SPTA, SLPR…VGSS, and SPSP…SASP. Disordered stretches follow at residues 326-358, 375-400, 442-520, and 545-566; these read TSPS…QDSK, VSSS…LPAP, DGHD…SAAS, and SPSP…NGAE. A coiled-coil region spans residues 563–619; the sequence is NGAELARVRRQLDEAKRKIRQWEESWQQVKQVCDAWQREAQEAKERARVADSDRQLA. An RING-type zinc finger spans residues 639–674; the sequence is CVACRERAHGAVLRPCQHHILCEPCAATAPECPYCK.

Belongs to the unkempt family. In terms of assembly, isoform 4 (C-terminal) interacts with the GTP-bound form of RAC1. Isoform 4 (C-terminal) interacts with SMARCD2/BAF60b. Post-translationally, isoform 4 is ubiquitinated in the C-terminal. Ubiquitination is enhanced by activated RAC1. The presence of the RING finger domain is not essential for ubiquitination to occur.

The protein resides in the cytoplasm. It is found in the nucleus. It participates in protein modification; protein ubiquitination. In terms of biological role, may participate in a protein complex showing an E3 ligase activity regulated by RAC1. Ubiquitination is directed towards itself and possibly other substrates, such as SMARCD2/BAF60b. Intrinsic E3 ligase activity has not been proven. This is Putative E3 ubiquitin-protein ligase UNKL (UNKL) from Homo sapiens (Human).